An 86-amino-acid polypeptide reads, in one-letter code: Large ribosomal subunit protein eL20 (86 aa).

This sequence belongs to the eukaryotic ribosomal protein eL20 family. As to quaternary structure, part of the 50S ribosomal subunit. Binds 23S rRNA.

This chain is Large ribosomal subunit protein eL20, found in Metallosphaera sedula (strain ATCC 51363 / DSM 5348 / JCM 9185 / NBRC 15509 / TH2).